A 175-amino-acid chain; its full sequence is MDIAIHHPWIRRPFFPFHSPSRLFDQFFGEHLLESDLFPASTSLSPFYFRPPSFLRAPSWIDTGLSEMRLEKDRFSVNLDVKHFSPEELKVKVLGDVIEVHGKHEERQDEHGFISREFHRKYRIPADVDPLTITSSLSSDGVLTVNGPRRQASGPERTIPITREEKPAVTAAPKK.

At Met1 the chain carries N-acetylmethionine. Ser19 bears the Phosphoserine mark. Ser41 carries O-linked (GlcNAc) serine glycosylation. Phosphoserine is present on residues Ser45 and Ser59. The 109-residue stretch at 56-164 (RAPSWIDTGL…PERTIPITRE (109 aa)) folds into the sHSP domain. His83 contributes to the Zn(2+) binding site. An N6-acetyllysine modification is found at Lys92. Zn(2+) contacts are provided by His104, Glu106, His111, and His119. The tract at residues 142–175 (VLTVNGPRRQASGPERTIPITREEKPAVTAAPKK) is disordered. The residue at position 166 (Lys166) is an N6-acetyllysine. Thr170 carries an O-linked (GlcNAc) threonine glycan.

This sequence belongs to the small heat shock protein (HSP20) family. As to quaternary structure, heteromer composed of three CRYAA and one CRYAB subunits. Aggregates with homologous proteins, including the small heat shock protein HSPB1, to form large heteromeric complexes. Inter-subunit bridging via zinc ions enhances stability, which is crucial as there is no protein turn over in the lens. Interacts with HSPBAP1 and TTN/titin. Interacts with TMEM109; in the cellular response to DNA damage. Interacts with DES; binds rapidly during early stages of DES filament assembly and a reduced binding seen in the later stages. Interacts with TMED10; the interaction mediates the translocation from the cytoplasm into the ERGIC (endoplasmic reticulum-Golgi intermediate compartment) and thereby secretion. Interacts with ATP6V1A and with MTOR, forming a ternary complex.

It is found in the cytoplasm. The protein localises to the nucleus. It localises to the secreted. Its subcellular location is the lysosome. May contribute to the transparency and refractive index of the lens. Has chaperone-like activity, preventing aggregation of various proteins under a wide range of stress conditions. In lens epithelial cells, stabilizes the ATP6V1A protein, preventing its degradation by the proteasome. The polypeptide is Alpha-crystallin B chain (CRYAB) (Sus scrofa (Pig)).